A 266-amino-acid polypeptide reads, in one-letter code: Tryptophan synthase alpha chain (266 aa).

Catalysis depends on proton acceptor residues glutamate 49 and aspartate 60.

This sequence belongs to the TrpA family. In terms of assembly, tetramer of two alpha and two beta chains.

It carries out the reaction (1S,2R)-1-C-(indol-3-yl)glycerol 3-phosphate + L-serine = D-glyceraldehyde 3-phosphate + L-tryptophan + H2O. It functions in the pathway amino-acid biosynthesis; L-tryptophan biosynthesis; L-tryptophan from chorismate: step 5/5. In terms of biological role, the alpha subunit is responsible for the aldol cleavage of indoleglycerol phosphate to indole and glyceraldehyde 3-phosphate. This is Tryptophan synthase alpha chain from Chloroflexus aurantiacus (strain ATCC 29364 / DSM 637 / Y-400-fl).